Reading from the N-terminus, the 168-residue chain is Phosphopantetheine adenylyltransferase (168 aa).

A substrate-binding site is contributed by T17. Residues 17-18 and H25 contribute to the ATP site; that span reads TF. Positions 49, 81, and 95 each coordinate substrate. Residues 96-98, E106, and 131-137 contribute to the ATP site; these read GLR and LMYISST.

This sequence belongs to the bacterial CoaD family. In terms of assembly, homohexamer. Requires Mg(2+) as cofactor.

The protein resides in the cytoplasm. It catalyses the reaction (R)-4'-phosphopantetheine + ATP + H(+) = 3'-dephospho-CoA + diphosphate. It functions in the pathway cofactor biosynthesis; coenzyme A biosynthesis; CoA from (R)-pantothenate: step 4/5. Its function is as follows. Reversibly transfers an adenylyl group from ATP to 4'-phosphopantetheine, yielding dephospho-CoA (dPCoA) and pyrophosphate. This is Phosphopantetheine adenylyltransferase from Legionella pneumophila (strain Paris).